We begin with the raw amino-acid sequence, 468 residues long: Ribulose bisphosphate carboxylase large chain (468 aa).

The residue at position 5 (K5) is an N6,N6,N6-trimethyllysine. Residues N114 and T164 each coordinate substrate. K166 acts as the Proton acceptor in catalysis. K168 contributes to the substrate binding site. Mg(2+) is bound by residues K192, D194, and E195. K192 is subject to N6-carboxylysine. Residue H285 is the Proton acceptor of the active site. Residues R286, H318, and S370 each coordinate substrate.

This sequence belongs to the RuBisCO large chain family. Type I subfamily. Heterohexadecamer of 8 large chains and 8 small chains; disulfide-linked. The disulfide link is formed within the large subunit homodimers. Mg(2+) serves as cofactor. The disulfide bond which can form in the large chain dimeric partners within the hexadecamer appears to be associated with oxidative stress and protein turnover.

It is found in the plastid. It localises to the chloroplast. It carries out the reaction 2 (2R)-3-phosphoglycerate + 2 H(+) = D-ribulose 1,5-bisphosphate + CO2 + H2O. The enzyme catalyses D-ribulose 1,5-bisphosphate + O2 = 2-phosphoglycolate + (2R)-3-phosphoglycerate + 2 H(+). Its function is as follows. RuBisCO catalyzes two reactions: the carboxylation of D-ribulose 1,5-bisphosphate, the primary event in carbon dioxide fixation, as well as the oxidative fragmentation of the pentose substrate in the photorespiration process. Both reactions occur simultaneously and in competition at the same active site. The protein is Ribulose bisphosphate carboxylase large chain of Tecoma stans (Yellow bells).